Reading from the N-terminus, the 253-residue chain is 2-dehydro-3-deoxy-D-gluconate 5-dehydrogenase (253 aa).

Residue 14–38 (VVTGCDTGLGQGMALGLAQAGCDIV) participates in NAD(+) binding. A substrate-binding site is contributed by Ser-145. Tyr-158 functions as the Proton acceptor in the catalytic mechanism.

The protein belongs to the short-chain dehydrogenases/reductases (SDR) family. In terms of assembly, homotetramer.

The enzyme catalyses 2-dehydro-3-deoxy-D-gluconate + NAD(+) = 3-deoxy-D-glycero-2,5-hexodiulosonate + NADH + H(+). It catalyses the reaction 4-pregnen-20,21-diol-3-one + NAD(+) = 21-hydroxyprogesterone + NADH + H(+). Catalyzes the reversible reduction of 2,5-diketo-3-deoxygluconate (DKII or 4,6-dihydroxy-2,5-dioxohexanoate) into 2-keto-3-deoxygluconate (KDG or 2-dehydro-3-deoxygluconate) with a concomitant oxidation of NADH. To a lesser extent, can also reduce 5-keto-D-gluconate and oxidize D-gluconate and 1,2-propanediol. Together with KduI, seems to play a role in the catabolism of hexuronates under osmotic stress conditions, substituting for the regular hexuronate degrading enzymes UxaABC and UxuAB whose expression is repressed in these conditions. In vitro, also exhibits NADH-dependent 20-ketosteroid reductase activity against eukaryotic steroid hormone 11-deoxycorticosterone (11-DOC), which is converted into the product 4-pregnen-20,21-diol-3-one. In addition to 11-DOC, five other C21 steroid compounds (11-deoxycortisol, cortisol, corticosterone, cortisone, and 21-hydroxypregnenolone) are reduced by KduD, but steroids lacking the hydroxyl group at C21 position, such as pregnenolone, testosterone propionate, cortisone acetate, or progesterone, cannot be used as substrate. The protein is 2-dehydro-3-deoxy-D-gluconate 5-dehydrogenase of Escherichia coli (strain K12).